A 313-amino-acid chain; its full sequence is Methionyl-tRNA formyltransferase (313 aa).

113–116 serves as a coordination point for (6S)-5,6,7,8-tetrahydrofolate; the sequence is SLLP.

This sequence belongs to the Fmt family.

The enzyme catalyses L-methionyl-tRNA(fMet) + (6R)-10-formyltetrahydrofolate = N-formyl-L-methionyl-tRNA(fMet) + (6S)-5,6,7,8-tetrahydrofolate + H(+). Its function is as follows. Attaches a formyl group to the free amino group of methionyl-tRNA(fMet). The formyl group appears to play a dual role in the initiator identity of N-formylmethionyl-tRNA by promoting its recognition by IF2 and preventing the misappropriation of this tRNA by the elongation apparatus. This Acidithiobacillus ferrooxidans (strain ATCC 23270 / DSM 14882 / CIP 104768 / NCIMB 8455) (Ferrobacillus ferrooxidans (strain ATCC 23270)) protein is Methionyl-tRNA formyltransferase.